Consider the following 377-residue polypeptide: 4-hydroxy-3-methylbut-2-en-1-yl diphosphate synthase (flavodoxin) (377 aa).

Residues cysteine 275, cysteine 278, cysteine 310, and glutamate 317 each contribute to the [4Fe-4S] cluster site.

Belongs to the IspG family. The cofactor is [4Fe-4S] cluster.

It catalyses the reaction (2E)-4-hydroxy-3-methylbut-2-enyl diphosphate + oxidized [flavodoxin] + H2O + 2 H(+) = 2-C-methyl-D-erythritol 2,4-cyclic diphosphate + reduced [flavodoxin]. Its pathway is isoprenoid biosynthesis; isopentenyl diphosphate biosynthesis via DXP pathway; isopentenyl diphosphate from 1-deoxy-D-xylulose 5-phosphate: step 5/6. Functionally, converts 2C-methyl-D-erythritol 2,4-cyclodiphosphate (ME-2,4cPP) into 1-hydroxy-2-methyl-2-(E)-butenyl 4-diphosphate. This is 4-hydroxy-3-methylbut-2-en-1-yl diphosphate synthase (flavodoxin) from Jannaschia sp. (strain CCS1).